The primary structure comprises 128 residues: Large-conductance mechanosensitive channel (128 aa).

The next 2 helical transmembrane spans lie at 11–31 (FALK…AAFG) and 70–90 (GAFI…FIFV).

It belongs to the MscL family. Homopentamer.

Its subcellular location is the cell membrane. Its function is as follows. Channel that opens in response to stretch forces in the membrane lipid bilayer. May participate in the regulation of osmotic pressure changes within the cell. The chain is Large-conductance mechanosensitive channel from Listeria monocytogenes serotype 4b (strain CLIP80459).